The following is a 364-amino-acid chain: Myeloid cell surface antigen CD33 (364 aa).

Positions 1-17 are cleaved as a signal peptide; the sequence is MPLLLLLPLLWAGALAM. Residues 18-259 are Extracellular-facing; that stretch reads DPNFWLQVQE…KQETRAGVVH (242 aa). Residues 19–135 form the Ig-like V-type domain; the sequence is PNFWLQVQES…KYSYKSPQLS (117 aa). 3 disulfide bridges follow: cysteine 36/cysteine 169, cysteine 41/cysteine 101, and cysteine 163/cysteine 212. Asparagine 100 and asparagine 113 each carry an N-linked (GlcNAc...) asparagine glycan. Arginine 119 is a binding site for N-acetylneuraminate. The region spanning 145-228 is the Ig-like C2-type domain; it reads PKILIPGTLE…AGVTTERTIQ (84 aa). D-galactose is bound at residue glutamate 154. N-linked (GlcNAc...) asparagine glycosylation is found at asparagine 160, asparagine 209, and asparagine 230. The helical transmembrane segment at 260–282 threads the bilayer; sequence GAIGGAGVTALLALCLCLIFFIV. The Cytoplasmic portion of the chain corresponds to 283-364; it reads KTHRRKAART…STEYSEVRTQ (82 aa). A disordered region spans residues 290–364; that stretch reads ARTAVGRNDT…STEYSEVRTQ (75 aa). Short sequence motifs (ITIM motif) lie at residues 338 to 343 and 356 to 361; these read LHYASL and TEYSEV. 2 positions are modified to phosphotyrosine; by LCK: tyrosine 340 and tyrosine 358.

It belongs to the immunoglobulin superfamily. SIGLEC (sialic acid binding Ig-like lectin) family. Homodimer; disulfide-linked. Interacts with PTPN6/SHP-1 and PTPN11/SHP-2 upon phosphorylation. Interacts with C1QA (via C-terminus); this interaction activates CD33 inhibitory motifs. In terms of processing, glycosylated. Glycosylation at Asn-100 is critical for regulating ligand recognition. Post-translationally, phosphorylation of Tyr-340 is involved in binding to PTPN6 and PTPN11. Phosphorylation of Tyr-358 is involved in binding to PTPN6. LCK phosphorylates Tyr-340 efficiently and Tyr-358 to a lesser extent. As to expression, monocytic/myeloid lineage cells. In the brain, CD33 is mainly expressed on microglial cells.

It is found in the cell membrane. Its subcellular location is the peroxisome. In terms of biological role, sialic-acid-binding immunoglobulin-like lectin (Siglec) that plays a role in mediating cell-cell interactions and in maintaining immune cells in a resting state. Preferentially recognizes and binds alpha-2,3- and more avidly alpha-2,6-linked sialic acid-bearing glycans. Upon engagement of ligands such as C1q or syalylated glycoproteins, two immunoreceptor tyrosine-based inhibitory motifs (ITIMs) located in CD33 cytoplasmic tail are phosphorylated by Src-like kinases such as LCK. These phosphorylations provide docking sites for the recruitment and activation of protein-tyrosine phosphatases PTPN6/SHP-1 and PTPN11/SHP-2. In turn, these phosphatases regulate downstream pathways through dephosphorylation of signaling molecules. One of the repressive effect of CD33 on monocyte activation requires phosphoinositide 3-kinase/PI3K. This Homo sapiens (Human) protein is Myeloid cell surface antigen CD33 (CD33).